We begin with the raw amino-acid sequence, 95 residues long: Cell division topological specificity factor (95 aa).

The protein belongs to the MinE family.

Functionally, prevents the cell division inhibition by proteins MinC and MinD at internal division sites while permitting inhibition at polar sites. This ensures cell division at the proper site by restricting the formation of a division septum at the midpoint of the long axis of the cell. The sequence is that of Cell division topological specificity factor from Psychrobacter cryohalolentis (strain ATCC BAA-1226 / DSM 17306 / VKM B-2378 / K5).